Consider the following 464-residue polypeptide: Siroheme synthase (464 aa).

The precorrin-2 dehydrogenase /sirohydrochlorin ferrochelatase stretch occupies residues 1 to 203 (MEFLPLFHNL…GQGDEAERLL (203 aa)). NAD(+) is bound by residues 22-23 (EI) and 43-44 (PQ). Serine 128 carries the phosphoserine modification. A uroporphyrinogen-III C-methyltransferase region spans residues 216 to 464 (GEVYLVGAGP…KWFEGAQSQV (249 aa)). Proline 225 contacts S-adenosyl-L-methionine. The Proton acceptor role is filled by aspartate 248. The active-site Proton donor is lysine 270. S-adenosyl-L-methionine contacts are provided by residues 301-303 (GGD), isoleucine 306, 331-332 (TA), methionine 383, and glycine 412.

The protein in the N-terminal section; belongs to the precorrin-2 dehydrogenase / sirohydrochlorin ferrochelatase family. This sequence in the C-terminal section; belongs to the precorrin methyltransferase family.

The enzyme catalyses uroporphyrinogen III + 2 S-adenosyl-L-methionine = precorrin-2 + 2 S-adenosyl-L-homocysteine + H(+). The catalysed reaction is precorrin-2 + NAD(+) = sirohydrochlorin + NADH + 2 H(+). It catalyses the reaction siroheme + 2 H(+) = sirohydrochlorin + Fe(2+). It participates in cofactor biosynthesis; adenosylcobalamin biosynthesis; precorrin-2 from uroporphyrinogen III: step 1/1. Its pathway is cofactor biosynthesis; adenosylcobalamin biosynthesis; sirohydrochlorin from precorrin-2: step 1/1. The protein operates within porphyrin-containing compound metabolism; siroheme biosynthesis; precorrin-2 from uroporphyrinogen III: step 1/1. It functions in the pathway porphyrin-containing compound metabolism; siroheme biosynthesis; siroheme from sirohydrochlorin: step 1/1. It participates in porphyrin-containing compound metabolism; siroheme biosynthesis; sirohydrochlorin from precorrin-2: step 1/1. Its function is as follows. Multifunctional enzyme that catalyzes the SAM-dependent methylations of uroporphyrinogen III at position C-2 and C-7 to form precorrin-2 via precorrin-1. Then it catalyzes the NAD-dependent ring dehydrogenation of precorrin-2 to yield sirohydrochlorin. Finally, it catalyzes the ferrochelation of sirohydrochlorin to yield siroheme. The sequence is that of Siroheme synthase from Pseudomonas fluorescens (strain SBW25).